We begin with the raw amino-acid sequence, 382 residues long: Secreted RxLR effector protein 118 (382 aa).

The signal sequence occupies residues 1 to 21 (MRGAYYVTIALLVVASSQISA). The RxLR-dEER motif lies at 48 to 65 (RSLRGSRDVSNDVAIEER). A disordered region spans residues 308-382 (MNKASTSKGK…AVTSLSSISN (75 aa)). Over residues 310 to 323 (KASTSKGKSSVFTR) the composition is skewed to polar residues.

The protein belongs to the RxLR effector family.

Its subcellular location is the secreted. The protein localises to the host nucleus. Secreted effector that completely suppresses the host cell death induced by cell death-inducing proteins. In Plasmopara viticola (Downy mildew of grapevine), this protein is Secreted RxLR effector protein 118.